The sequence spans 574 residues: Arginine--tRNA ligase (574 aa).

Residues 121–131 (PNIAKEMHIGH) carry the 'HIGH' region motif.

This sequence belongs to the class-I aminoacyl-tRNA synthetase family. Monomer.

Its subcellular location is the cytoplasm. The catalysed reaction is tRNA(Arg) + L-arginine + ATP = L-arginyl-tRNA(Arg) + AMP + diphosphate. This chain is Arginine--tRNA ligase, found in Buchnera aphidicola subsp. Acyrthosiphon pisum (strain 5A).